A 174-amino-acid chain; its full sequence is Large ribosomal subunit protein uL10 (174 aa).

This sequence belongs to the universal ribosomal protein uL10 family. As to quaternary structure, part of the ribosomal stalk of the 50S ribosomal subunit. The N-terminus interacts with L11 and the large rRNA to form the base of the stalk. The C-terminus forms an elongated spine to which L12 dimers bind in a sequential fashion forming a multimeric L10(L12)X complex.

Its function is as follows. Forms part of the ribosomal stalk, playing a central role in the interaction of the ribosome with GTP-bound translation factors. This Anaeromyxobacter dehalogenans (strain 2CP-1 / ATCC BAA-258) protein is Large ribosomal subunit protein uL10.